A 232-amino-acid polypeptide reads, in one-letter code: GFP-like fluorescent chromoprotein dsFP483 (232 aa).

The segment at residues Gln-66–Gly-68 is a cross-link (2-iminomethyl-5-imidazolinone (Gln-Gly)). At Tyr-67 the chain carries 2,3-didehydrotyrosine.

It belongs to the GFP family. In terms of processing, contains a chromophore consisting of modified amino acid residues. The chromophore is formed by autocatalytic backbone condensation between Xaa-N and Gly-(N+2), oxidation of Tyr-(N+1) to didehydrotyrosine, and formation of a double bond to the alpha-amino nitrogen of residue Xaa-N. Maturation of the chromophore requires nothing other than molecular oxygen. The precise stereochemistry of the tyrosine has not been determined. As to expression, oral disk.

Pigment protein that is green in color. The chain is GFP-like fluorescent chromoprotein dsFP483 from Discosoma striata (Striped mushroom).